We begin with the raw amino-acid sequence, 52 residues long: Eukaryotic translation initiation factor 2 subunit 1 (52 aa).

The region spanning Glu-16 to Arg-52 is the S1 motif domain. Ser-48 is modified (phosphoserine; by HRI). Ser-51 is modified (phosphoserine).

The protein belongs to the eIF-2-alpha family. Eukaryotic translation initiation factor 2 eIF2 is a heterotrimeric complex composed of an alpha (EIF2S1), a beta (EIF2S2) and a gamma (EIF2S3) chain. eIF2 is member of the 43S pre-initiation complex (43S PIC). eIF2 forms a complex with at least CELF1/CUGBP1, CALR, CALR3, EIF2S1, EIF2S2, HSP90B1 and HSPA5. Interaction with METAP2 protects EIF2S1 from inhibitory phosphorylation. Interacts with ABCF1. Associates with ribosomes. Interacts with DDX3X in an RNA-independent manner. Phosphorylation at Ser-48 and Ser-51 stabilizes the eIF-2/GDP/eIF2B complex and prevents GDP/GTP exchange reaction, thus impairing the recycling of eIF-2 between successive rounds of initiation and leading to global inhibition of translation, while concomitantly initiating the preferential translation of integrated stress response (ISR)-specific mRNAs. Substrate for at least 4 kinases: EIF2AK1/HRI, EIF2AK2/PKR, EIF2AK3/PERK and EIF2AK4/GCN2. Phosphorylation on Ser-51 by the EIF2AK4/GCN2 protein kinase occurs in response to amino acid starvation and UV irradiation. Phosphorylation at Ser-51 by the EIF2AK3/PERK protein kinase occurs in response to the unfolded protein response. Phosphorylation at Ser-51 by EIF2AK1/HRI in response to mitochondrial damage promotes relocalization to the mitochondrial surface.

The protein localises to the cytoplasm. Its subcellular location is the stress granule. The protein resides in the cytosol. It localises to the mitochondrion. Its activity is regulated as follows. Activity is regulated by phosphorylation at Ser-49 and Ser-52, which stabilizes the eIF2/GDP/eIF2B complex and prevents the eIF2B-mediated exchange of GDP for GTP, thereby preventing the formation of the 43S pre-initiation complex (43S PIC). This results in the global attenuation of 5' cap-dependent protein synthesis and concomitant translation of ISR-specific mRNAs that contain a short upstream open reading frame (uORF) in their 5' UTR, such as ATF4, ATF5, DDIT3/CHOP and PPP1R15A/GADD34. In terms of biological role, member of the eIF2 complex that functions in the early steps of protein synthesis by forming a ternary complex with GTP and initiator tRNA. This complex binds to a 40S ribosomal subunit, followed by mRNA binding to form a 43S pre-initiation complex. Junction of the 60S ribosomal subunit to form the 80S initiation complex is preceded by hydrolysis of the GTP bound to eIF2 and release of an eIF2-GDP binary complex. In order for eIF2 to recycle and catalyze another round of initiation, the GDP bound to eIF2 must exchange with GTP by way of a reaction catalyzed by eIF2B. EIF2S1/eIF2-alpha is a key component of the integrated stress response (ISR), required for adaptation to various stress: phosphorylation by metabolic-stress sensing protein kinases (EIF2AK1/HRI, EIF2AK2/PKR, EIF2AK3/PERK and EIF2AK4/GCN2) in response to stress converts EIF2S1/eIF2-alpha in a global protein synthesis inhibitor, leading to a attenuation of cap-dependent translation, while concomitantly initiating the preferential translation of ISR-specific mRNAs, such as the transcriptional activators ATF4 and QRICH1, and hence allowing ATF4- and QRICH1-mediated reprogramming. EIF2S1/eIF2-alpha also acts as an activator of mitophagy in response to mitochondrial damage: phosphorylation by EIF2AK1/HRI promotes relocalization to the mitochondrial surface, thereby triggering PRKN-independent mitophagy. This is Eukaryotic translation initiation factor 2 subunit 1 (EIF2S1) from Oryctolagus cuniculus (Rabbit).